The sequence spans 196 residues: Small ribosomal subunit protein uS4c (196 aa).

The interval 17–36 (ALPGLTRKTPKSGSNLKKKF) is disordered. The region spanning 89 to 157 (MRLDNILFRL…VQNYIASSDP (69 aa)) is the S4 RNA-binding domain.

This sequence belongs to the universal ribosomal protein uS4 family. As to quaternary structure, part of the 30S ribosomal subunit. Contacts protein S5. The interaction surface between S4 and S5 is involved in control of translational fidelity.

It localises to the plastid. The protein localises to the chloroplast. Functionally, one of the primary rRNA binding proteins, it binds directly to 16S rRNA where it nucleates assembly of the body of the 30S subunit. Its function is as follows. With S5 and S12 plays an important role in translational accuracy. This Calamagrostis epigeios (Wood small-reed grass) protein is Small ribosomal subunit protein uS4c (rps4).